Consider the following 312-residue polypeptide: Acetyl-coenzyme A carboxylase carboxyl transferase subunit beta (312 aa).

One can recognise a CoA carboxyltransferase N-terminal domain in the interval 24 to 293 (LWIKCPDSGQ…VEHAKPAPQL (270 aa)). The tract at residues 286–312 (HAKPAPQLPPPAKPAETAEAPAVATSA) is disordered. The segment covering 299 to 312 (PAETAEAPAVATSA) has biased composition (low complexity).

This sequence belongs to the AccD/PCCB family. In terms of assembly, acetyl-CoA carboxylase is a heterohexamer composed of biotin carboxyl carrier protein (AccB), biotin carboxylase (AccC) and two subunits each of ACCase subunit alpha (AccA) and ACCase subunit beta (AccD).

The protein resides in the cytoplasm. The enzyme catalyses N(6)-carboxybiotinyl-L-lysyl-[protein] + acetyl-CoA = N(6)-biotinyl-L-lysyl-[protein] + malonyl-CoA. It functions in the pathway lipid metabolism; malonyl-CoA biosynthesis; malonyl-CoA from acetyl-CoA: step 1/1. Functionally, component of the acetyl coenzyme A carboxylase (ACC) complex. Biotin carboxylase (BC) catalyzes the carboxylation of biotin on its carrier protein (BCCP) and then the CO(2) group is transferred by the transcarboxylase to acetyl-CoA to form malonyl-CoA. The chain is Acetyl-coenzyme A carboxylase carboxyl transferase subunit beta from Bradyrhizobium sp. (strain ORS 278).